The primary structure comprises 358 residues: UDP-3-O-acylglucosamine N-acyltransferase (358 aa).

The active-site Proton acceptor is the His-248.

This sequence belongs to the transferase hexapeptide repeat family. LpxD subfamily. Homotrimer.

The enzyme catalyses a UDP-3-O-[(3R)-3-hydroxyacyl]-alpha-D-glucosamine + a (3R)-hydroxyacyl-[ACP] = a UDP-2-N,3-O-bis[(3R)-3-hydroxyacyl]-alpha-D-glucosamine + holo-[ACP] + H(+). It functions in the pathway bacterial outer membrane biogenesis; LPS lipid A biosynthesis. Functionally, catalyzes the N-acylation of UDP-3-O-acylglucosamine using 3-hydroxyacyl-ACP as the acyl donor. Is involved in the biosynthesis of lipid A, a phosphorylated glycolipid that anchors the lipopolysaccharide to the outer membrane of the cell. In Synechococcus sp. (strain WH7803), this protein is UDP-3-O-acylglucosamine N-acyltransferase.